The sequence spans 342 residues: UDP-3-O-acylglucosamine N-acyltransferase (342 aa).

The Proton acceptor role is filled by H241.

This sequence belongs to the transferase hexapeptide repeat family. LpxD subfamily. Homotrimer.

The enzyme catalyses a UDP-3-O-[(3R)-3-hydroxyacyl]-alpha-D-glucosamine + a (3R)-hydroxyacyl-[ACP] = a UDP-2-N,3-O-bis[(3R)-3-hydroxyacyl]-alpha-D-glucosamine + holo-[ACP] + H(+). Its pathway is bacterial outer membrane biogenesis; LPS lipid A biosynthesis. Catalyzes the N-acylation of UDP-3-O-acylglucosamine using 3-hydroxyacyl-ACP as the acyl donor. Is involved in the biosynthesis of lipid A, a phosphorylated glycolipid that anchors the lipopolysaccharide to the outer membrane of the cell. This is UDP-3-O-acylglucosamine N-acyltransferase from Pasteurella multocida (strain Pm70).